The sequence spans 481 residues: Trigger factor (481 aa).

One can recognise a PPIase FKBP-type domain in the interval 174 to 261 (GDIAVVSFKG…LKDLKEKELP (88 aa)). The segment at 435 to 481 (VKEKTTKASQASKTTKAKKTTTKTTKATKTATKTTKATKTQNKKEKK) is disordered. A compositionally biased stretch (low complexity) spans 456 to 474 (TKTTKATKTATKTTKATKT).

It belongs to the FKBP-type PPIase family. Tig subfamily.

It is found in the cytoplasm. It carries out the reaction [protein]-peptidylproline (omega=180) = [protein]-peptidylproline (omega=0). Involved in protein export. Acts as a chaperone by maintaining the newly synthesized protein in an open conformation. Functions as a peptidyl-prolyl cis-trans isomerase. The chain is Trigger factor from Prochlorococcus marinus (strain MIT 9312).